A 264-amino-acid chain; its full sequence is Thymidylate synthase (264 aa).

R21 lines the dUMP pocket. H51 is a binding site for (6R)-5,10-methylene-5,6,7,8-tetrahydrofolate. 126-127 contributes to the dUMP binding site; it reads RR. Residue C146 is the Nucleophile of the active site. DUMP is bound by residues 166-169, N177, and 207-209; these read RSAD and HIY. D169 lines the (6R)-5,10-methylene-5,6,7,8-tetrahydrofolate pocket. Residue A263 coordinates (6R)-5,10-methylene-5,6,7,8-tetrahydrofolate.

It belongs to the thymidylate synthase family. Bacterial-type ThyA subfamily. As to quaternary structure, homodimer.

It localises to the cytoplasm. It carries out the reaction dUMP + (6R)-5,10-methylene-5,6,7,8-tetrahydrofolate = 7,8-dihydrofolate + dTMP. Its pathway is pyrimidine metabolism; dTTP biosynthesis. Its function is as follows. Catalyzes the reductive methylation of 2'-deoxyuridine-5'-monophosphate (dUMP) to 2'-deoxythymidine-5'-monophosphate (dTMP) while utilizing 5,10-methylenetetrahydrofolate (mTHF) as the methyl donor and reductant in the reaction, yielding dihydrofolate (DHF) as a by-product. This enzymatic reaction provides an intracellular de novo source of dTMP, an essential precursor for DNA biosynthesis. This chain is Thymidylate synthase, found in Parabacteroides distasonis (strain ATCC 8503 / DSM 20701 / CIP 104284 / JCM 5825 / NCTC 11152).